The primary structure comprises 344 residues: N-acetyl-gamma-glutamyl-phosphate reductase (344 aa).

Residue Cys150 is part of the active site.

Belongs to the NAGSA dehydrogenase family. Type 1 subfamily.

The protein localises to the cytoplasm. The catalysed reaction is N-acetyl-L-glutamate 5-semialdehyde + phosphate + NADP(+) = N-acetyl-L-glutamyl 5-phosphate + NADPH + H(+). Its pathway is amino-acid biosynthesis; L-arginine biosynthesis; N(2)-acetyl-L-ornithine from L-glutamate: step 3/4. Catalyzes the NADPH-dependent reduction of N-acetyl-5-glutamyl phosphate to yield N-acetyl-L-glutamate 5-semialdehyde. This chain is N-acetyl-gamma-glutamyl-phosphate reductase, found in Pseudomonas putida (strain ATCC 700007 / DSM 6899 / JCM 31910 / BCRC 17059 / LMG 24140 / F1).